A 208-amino-acid polypeptide reads, in one-letter code: Thiamine-phosphate synthase (208 aa).

4-amino-2-methyl-5-(diphosphooxymethyl)pyrimidine-binding positions include 37 to 41 and Asn-73; that span reads QYREK. Mg(2+) contacts are provided by Asp-74 and Asp-93. Ser-112 lines the 4-amino-2-methyl-5-(diphosphooxymethyl)pyrimidine pocket. 139-141 is a binding site for 2-[(2R,5Z)-2-carboxy-4-methylthiazol-5(2H)-ylidene]ethyl phosphate; it reads TIS. Residue Lys-142 coordinates 4-amino-2-methyl-5-(diphosphooxymethyl)pyrimidine. Residues Gly-171 and 191-192 each bind 2-[(2R,5Z)-2-carboxy-4-methylthiazol-5(2H)-ylidene]ethyl phosphate; that span reads IS.

The protein belongs to the thiamine-phosphate synthase family. Requires Mg(2+) as cofactor.

The catalysed reaction is 2-[(2R,5Z)-2-carboxy-4-methylthiazol-5(2H)-ylidene]ethyl phosphate + 4-amino-2-methyl-5-(diphosphooxymethyl)pyrimidine + 2 H(+) = thiamine phosphate + CO2 + diphosphate. It catalyses the reaction 2-(2-carboxy-4-methylthiazol-5-yl)ethyl phosphate + 4-amino-2-methyl-5-(diphosphooxymethyl)pyrimidine + 2 H(+) = thiamine phosphate + CO2 + diphosphate. The enzyme catalyses 4-methyl-5-(2-phosphooxyethyl)-thiazole + 4-amino-2-methyl-5-(diphosphooxymethyl)pyrimidine + H(+) = thiamine phosphate + diphosphate. It functions in the pathway cofactor biosynthesis; thiamine diphosphate biosynthesis; thiamine phosphate from 4-amino-2-methyl-5-diphosphomethylpyrimidine and 4-methyl-5-(2-phosphoethyl)-thiazole: step 1/1. Functionally, condenses 4-methyl-5-(beta-hydroxyethyl)thiazole monophosphate (THZ-P) and 2-methyl-4-amino-5-hydroxymethyl pyrimidine pyrophosphate (HMP-PP) to form thiamine monophosphate (TMP). The sequence is that of Thiamine-phosphate synthase from Listeria welshimeri serovar 6b (strain ATCC 35897 / DSM 20650 / CCUG 15529 / CIP 8149 / NCTC 11857 / SLCC 5334 / V8).